The chain runs to 648 residues: UDP-galactose:fucoside alpha-3-galactosyltransferase (648 aa).

WD repeat units follow at residues 320–358, 372–420, 422–461, 464–505, 507–546, 556–595, and 617–648; these read NHTD…GNDT, HKRG…IQTF, GHTG…FKRV, GHNG…NIIK, NQGG…NFND, NENS…NNNN, and HLNS…SWDL.

The protein belongs to the glycosyltransferase 77 family. Mn(2+) serves as cofactor.

It localises to the cytoplasm. It catalyses the reaction an alpha-L-fucosyl-(1-&gt;2)-beta-D-galactosyl derivative + UDP-alpha-D-galactose = an alpha-D-galactosyl-(1-&gt;3)-[alpha-L-fucosyl-(1-&gt;2)]-beta-D-galactosyl derivative + UDP + H(+). It participates in protein modification; protein glycosylation. With respect to regulation, stimulated by dithiothreitol (DTT) in vitro. Totally inhibited by EDTA. Specifically catalyzes the transfer of a galactosyl residue to the hydroxyproline-linked saccharide on Skp1 protein (fpaA/fpaB). Catalyzes the formation of a Gal-alpha-1,3-Fuc linkage, leading to Gal-Fuc-Gal-GlcNAc-HyPro143-Skp1. This Dictyostelium discoideum (Social amoeba) protein is UDP-galactose:fucoside alpha-3-galactosyltransferase (agtA).